The following is a 247-amino-acid chain: UPF0612 protein P20C8.01c (247 aa).

Coiled-coil stretches lie at residues 27 to 63 (IKRY…MKYE) and 138 to 225 (DTVQ…DARS).

It belongs to the UPF0612 family.

The protein localises to the cytoplasm. The sequence is that of UPF0612 protein P20C8.01c from Schizosaccharomyces pombe (strain 972 / ATCC 24843) (Fission yeast).